A 1025-amino-acid polypeptide reads, in one-letter code: Complement receptor type 2 (1025 aa).

A signal peptide spans 1 to 11; that stretch reads MLTWFLFYFSE. Residues 12-75 enclose the Sushi 1 domain; it reads ISCDPPPEVK…WDKAPPICES (64 aa). Residues 12–963 are Extracellular-facing; the sequence is ISCDPPPEVK…PLALCKYRRW (952 aa). Disulfide bonds link C14–C56 and C42–C73. N-linked (GlcNAc...) asparagine glycans are attached at residues N77 and N113. Sushi domains lie at 80 to 140, 144 to 204, 205 to 265, 266 to 336, 341 to 400, 401 to 460, 461 to 516, 517 to 587, 592 to 651, 652 to 706, 707 to 771, 776 to 835, 839 to 899, and 900 to 960; these read ISCS…VCES, LECP…TCKE, AQCE…VCKE, ILCP…YCVL, VLCL…VCEK, GCQA…QCTV, AECK…LCKE, ITCP…LCKL, VQCT…LCKK, EGCE…VCTV, ILCQ…QCLQ, THCP…TCIR, LGCQ…FCKE, and VNCS…LCKY. Intrachain disulfides connect C82/C124, C110/C138, C146/C189, C175/C202, C207/C248, C234/C263, C268/C317, C297/C334, C343/C385, C371/C398, C402/C445, C431/C458, C463/C501, C487/C514, C519/C568, C548/C585, C594/C636, C622/C649, C654/C689, C675/C704, C709/C752, C738/C769, C778/C820, C806/C833, C841/C884, and C870/C897. N276, N316, N364, and N380 each carry an N-linked (GlcNAc...) asparagine glycan. N484 is a glycosylation site (N-linked (GlcNAc...) asparagine). N527 carries an N-linked (GlcNAc...) asparagine glycan. N-linked (GlcNAc...) asparagine glycans are attached at residues N615 and N639. N694 carries N-linked (GlcNAc...) asparagine glycosylation. N754, N790, N813, N823, and N851 each carry an N-linked (GlcNAc...) asparagine glycan. Residue N901 is glycosylated (N-linked (GlcNAc...) asparagine). Intrachain disulfides connect C902–C945 and C931–C958. A helical membrane pass occupies residues 964–990; sequence STIPLICGISVGSALIILMSVGFCMIL. The Cytoplasmic portion of the chain corresponds to 991 to 1025; that stretch reads KHRESNYYTKTRPKEGALHLETREVYSIDPYNPAS.

It belongs to the receptors of complement activation (RCA) family. Interacts (via Sushi domain 1 and 2) with C3. Interacts with CD19. Part of a complex composed of CD19, CR2/CD21, CD81 and IFITM1/CD225 in the membrane of mature B-cells. Interacts (via Sushi domain 1 and 2) with FCER2 (via the C-terminus). Interacts with CD23. Interacts with FCRL5. Interacts with CR1. Interacts with INFNA1. As to expression, B-lymphocytes.

It localises to the cell membrane. Functionally, serves as a receptor for various ligands including complement component CD3d, HNRNPU OR IFNA1. When C3d is bound to antigens, attaches to C3d on B-cell surface and thereby facilitates the recognition and uptake of antigens by B-cells. This interaction enhances B-cell activation and subsequent immune responses. Forms a complex with several partners on the surface of B-cells including CD19, FCRL5 and CD81, to form the B-cell coreceptor complex that plays a crucial role in B-cell activation and signaling. Also induces specific intracellular signaling separately from the BCR and CD19 by activating the tyrosine kinase SRC, which then phosphorylates nucleolin/NCL and triggers AKT and GSK3 kinase activities in a SYK/CD19-independent manner. Acts as a ligand for CD23 (FcepsilonRII), a low-affinity receptor for IgE, which is expressed on B-cells and other immune cells, and thus participates in the regulation of IgE production. The sequence is that of Complement receptor type 2 (Cr2) from Mus musculus (Mouse).